The chain runs to 387 residues: Succinate--CoA ligase [ADP-forming] subunit beta (387 aa).

ATP contacts are provided by residues lysine 46, 53–55 (GRG), glutamate 99, cysteine 102, and glutamate 107. Mg(2+) contacts are provided by asparagine 196 and aspartate 210. Substrate-binding positions include asparagine 261 and 318 to 320 (GIV).

This sequence belongs to the succinate/malate CoA ligase beta subunit family. As to quaternary structure, heterotetramer of two alpha and two beta subunits. Mg(2+) is required as a cofactor.

It catalyses the reaction succinate + ATP + CoA = succinyl-CoA + ADP + phosphate. The catalysed reaction is GTP + succinate + CoA = succinyl-CoA + GDP + phosphate. It participates in carbohydrate metabolism; tricarboxylic acid cycle; succinate from succinyl-CoA (ligase route): step 1/1. Its function is as follows. Succinyl-CoA synthetase functions in the citric acid cycle (TCA), coupling the hydrolysis of succinyl-CoA to the synthesis of either ATP or GTP and thus represents the only step of substrate-level phosphorylation in the TCA. The beta subunit provides nucleotide specificity of the enzyme and binds the substrate succinate, while the binding sites for coenzyme A and phosphate are found in the alpha subunit. The sequence is that of Succinate--CoA ligase [ADP-forming] subunit beta from Campylobacter hominis (strain ATCC BAA-381 / DSM 21671 / CCUG 45161 / LMG 19568 / NCTC 13146 / CH001A).